Consider the following 1077-residue polypeptide: Receptor-type guanylate cyclase daf-11 (1077 aa).

N-linked (GlcNAc...) asparagine glycans are attached at residues N14, N112, N149, and N311. Residues 335-355 traverse the membrane as a helical segment; it reads TGVIIAIAVIMGVLLMFIIIL. The Protein kinase domain occupies 355–695; it reads LTTIRKCCNG…LARKIIDTVL (341 aa). Over 356–1077 the chain is Cytoplasmic; the sequence is TTIRKCCNGS…DSQASTIPDN (722 aa). A Guanylate cyclase domain is found at 765-895; sequence TILYSDIVGF…EAVILASKME (131 aa). 3 residues coordinate Mg(2+): D770, I771, and D814. Positions 983–1034 form a coiled coil; sequence KDKMTLAKEKVIAERKNEEERLQRQQTLQEALEEHEEEIEMNEVLVDEDEGE. A disordered region spans residues 1048–1077; it reads TQMEELEDEPAGRTIGHGRLDSQASTIPDN.

Belongs to the adenylyl cyclase class-4/guanylyl cyclase family. As to expression, expressed in sensory neurons including ASI, ASJ, ASK, AWB and AWC. Expressed in ASJ neurons in the dauer stage.

The protein resides in the cell membrane. Its subcellular location is the cell projection. The protein localises to the dendrite. It is found in the cilium. It localises to the perikaryon. The catalysed reaction is GTP = 3',5'-cyclic GMP + diphosphate. In terms of biological role, guanylate cyclase involved in the production of the second messenger cGMP. In addition, regulates cGMP levels by controlling the transcription of 3',5'-cyclic phosphodiesterase pde-1 and pde-5 mRNAs. Involved in the olfactory, light and pheromone sensing pathways. Part of the chemosensory mechanism of the ASJ sensory neuron that controls dauer formation and dauer recovery. Promotes the calcium flux in ASJ sensory neurons in response to onset and removal of a nitric oxide (NO) stimulus and is thereby required for the behavioral avoidance response to NO-producing organisms like P.aeruginosa. In ASI and ASJ sensory neurons, controls dauer formation and behavioral response to P.aeruginosa by up-regulating the transcription of daf-7, a member of the TGF-beta family. Required for the chemotaxis responses to non-volatile and volatile attractants mediated by the sensory neurons ASE and AWC respectively. Required in ASJ neurons for phototransduction downstream of G protein coupled-photoreceptor lite-1. Plays a role in the development of ASJ sensory neuron axons during late larval stages and in the maintenance of normal axon morphology in adults. Required to maintain the expression of putative olfactory receptor str-2 in one of the two AWC neurons in adults. Regulates, via the production of cGMP, lifespan (in some environmental conditions), sensitivity to oxidative stress and entry into quiescence triggered by satiety. In AWB and AWC sensory neurons, mediates the recognition of food odors which subsequently allows for the detection of preferred food sources. The protein is Receptor-type guanylate cyclase daf-11 of Caenorhabditis elegans.